Here is a 581-residue protein sequence, read N- to C-terminus: Phosphoinositide phospholipase C 2 (581 aa).

Positions E26–H102 constitute an EF-hand-like domain. One can recognise a PI-PLC X-box domain in the interval H103–K248. Catalysis depends on residues H118 and H164. The segment at P279 to P314 is disordered. The span at D294–E305 shows a compositional bias: acidic residues. Positions K317 to L433 constitute a PI-PLC Y-box domain. Positions K434–S563 constitute a C2 domain.

Ca(2+) serves as cofactor. Post-translationally, phosphorylation level varies significantly during early response to bacterial elicitor. In terms of tissue distribution, expressed in roots, shoots, leaves and flowers.

The protein resides in the cell membrane. It catalyses the reaction a 1,2-diacyl-sn-glycero-3-phospho-(1D-myo-inositol-4,5-bisphosphate) + H2O = 1D-myo-inositol 1,4,5-trisphosphate + a 1,2-diacyl-sn-glycerol + H(+). In terms of biological role, the production of the second messenger molecules diacylglycerol (DAG) and inositol 1,4,5-trisphosphate (IP3) is mediated by activated phosphatidylinositol-specific phospholipase C enzymes. At physiological calcium concentration, the preferred substrate is phosphatidylinositol 4,5-bisphosphate versus phosphatidylinositol. In Arabidopsis thaliana (Mouse-ear cress), this protein is Phosphoinositide phospholipase C 2 (PLC2).